The primary structure comprises 114 residues: Superoxide dismutase [Cu-Zn] (114 aa).

Residues His-37, His-39, and His-54 each contribute to the Cu cation site. Zn(2+) contacts are provided by His-54, His-62, His-71, and Asp-74. The interval 54 to 80 is disordered; the sequence is HFNPGNKEHGAPTDGNRHLGDLGNIQA. Basic and acidic residues predominate over residues 59-73; sequence NKEHGAPTDGNRHLG. Cu cation is bound at residue His-111.

It belongs to the Cu-Zn superoxide dismutase family. Homodimer. Requires Cu cation as cofactor. Zn(2+) serves as cofactor.

It is found in the cytoplasm. The catalysed reaction is 2 superoxide + 2 H(+) = H2O2 + O2. Functionally, destroys radicals which are normally produced within the cells and which are toxic to biological systems. In Drosophila tolteca (Fruit fly), this protein is Superoxide dismutase [Cu-Zn].